The chain runs to 370 residues: Homospermidine synthase (370 aa).

Belongs to the deoxyhypusine synthase family. Homotetramer. It depends on NAD(+) as a cofactor.

It catalyses the reaction putrescine + spermidine = sym-homospermidine + propane-1,3-diamine. It participates in alkaloid biosynthesis; pyrrolizidine alkaloid biosynthesis. Its function is as follows. Catalyzes the transfer of an aminobutyl unit from spermidine onto putrescine. The resulting polyamine homospermidine is a precursor in the biosynthesis of pyrrolizidine alkaloids. The sequence is that of Homospermidine synthase (HSS1) from Senecio vulgaris (Common groundsel).